The following is a 433-amino-acid chain: ATP-dependent protease ATPase subunit HslU (433 aa).

ATP is bound by residues valine 18, 60-65 (GVGKTE), aspartate 246, glutamate 311, and arginine 383.

This sequence belongs to the ClpX chaperone family. HslU subfamily. As to quaternary structure, a double ring-shaped homohexamer of HslV is capped on each side by a ring-shaped HslU homohexamer. The assembly of the HslU/HslV complex is dependent on binding of ATP.

It localises to the cytoplasm. In terms of biological role, ATPase subunit of a proteasome-like degradation complex; this subunit has chaperone activity. The binding of ATP and its subsequent hydrolysis by HslU are essential for unfolding of protein substrates subsequently hydrolyzed by HslV. HslU recognizes the N-terminal part of its protein substrates and unfolds these before they are guided to HslV for hydrolysis. The protein is ATP-dependent protease ATPase subunit HslU of Rhodopseudomonas palustris (strain BisB5).